Here is a 236-residue protein sequence, read N- to C-terminus: Small ribosomal subunit protein uS2c (236 aa).

It belongs to the universal ribosomal protein uS2 family.

It localises to the plastid. The protein resides in the chloroplast. This chain is Small ribosomal subunit protein uS2c (rps2), found in Physcomitrium patens (Spreading-leaved earth moss).